A 176-amino-acid chain; its full sequence is Phosphopantetheine adenylyltransferase (176 aa).

Ser8 provides a ligand contact to substrate. ATP is bound by residues 8 to 9 (SF) and His16. Residues Lys40, Thr72, and Arg86 each contribute to the substrate site. Residues 87–89 (GLR), Glu97, and 122–128 (YSFLSSS) each bind ATP.

It belongs to the bacterial CoaD family. In terms of assembly, homohexamer. Mg(2+) is required as a cofactor.

The protein resides in the cytoplasm. It carries out the reaction (R)-4'-phosphopantetheine + ATP + H(+) = 3'-dephospho-CoA + diphosphate. It participates in cofactor biosynthesis; coenzyme A biosynthesis; CoA from (R)-pantothenate: step 4/5. Functionally, reversibly transfers an adenylyl group from ATP to 4'-phosphopantetheine, yielding dephospho-CoA (dPCoA) and pyrophosphate. The chain is Phosphopantetheine adenylyltransferase from Acaryochloris marina (strain MBIC 11017).